Consider the following 231-residue polypeptide: tRNA1(Val) (adenine(37)-N6)-methyltransferase (231 aa).

It belongs to the methyltransferase superfamily. tRNA (adenine-N(6)-)-methyltransferase family.

The protein localises to the cytoplasm. The catalysed reaction is adenosine(37) in tRNA1(Val) + S-adenosyl-L-methionine = N(6)-methyladenosine(37) in tRNA1(Val) + S-adenosyl-L-homocysteine + H(+). Functionally, specifically methylates the adenine in position 37 of tRNA(1)(Val) (anticodon cmo5UAC). This chain is tRNA1(Val) (adenine(37)-N6)-methyltransferase, found in Flavobacteriaceae bacterium (strain 3519-10).